The primary structure comprises 269 residues: Formamidopyrimidine-DNA glycosylase (269 aa).

Pro2 (schiff-base intermediate with DNA) is an active-site residue. The Proton donor role is filled by Glu3. Lys57 functions as the Proton donor; for beta-elimination activity in the catalytic mechanism. DNA contacts are provided by His90, Arg109, and Lys150. An FPG-type zinc finger spans residues 235–269 (QVYGRKGEPCRVCGTPIVATKHAQRATFYCRHCQK). Arg259 functions as the Proton donor; for delta-elimination activity in the catalytic mechanism.

It belongs to the FPG family. As to quaternary structure, monomer. Zn(2+) is required as a cofactor.

It carries out the reaction Hydrolysis of DNA containing ring-opened 7-methylguanine residues, releasing 2,6-diamino-4-hydroxy-5-(N-methyl)formamidopyrimidine.. The enzyme catalyses 2'-deoxyribonucleotide-(2'-deoxyribose 5'-phosphate)-2'-deoxyribonucleotide-DNA = a 3'-end 2'-deoxyribonucleotide-(2,3-dehydro-2,3-deoxyribose 5'-phosphate)-DNA + a 5'-end 5'-phospho-2'-deoxyribonucleoside-DNA + H(+). Involved in base excision repair of DNA damaged by oxidation or by mutagenic agents. Acts as a DNA glycosylase that recognizes and removes damaged bases. Has a preference for oxidized purines, such as 7,8-dihydro-8-oxoguanine (8-oxoG). Has AP (apurinic/apyrimidinic) lyase activity and introduces nicks in the DNA strand. Cleaves the DNA backbone by beta-delta elimination to generate a single-strand break at the site of the removed base with both 3'- and 5'-phosphates. The protein is Formamidopyrimidine-DNA glycosylase of Salmonella enteritidis PT4 (strain P125109).